Here is a 310-residue protein sequence, read N- to C-terminus: MEGNKTWITDITLPRFQVGPALEILLCGLFSAFYTLTLLGNGVIFGIICLDCKLHTPMYFFLSHLAIVDISYASNYVPKMLTNLMNQESTISFFPCIMQTFLYLAFAHVECLILVVMSYDRYADICHPLRYNSLMSWRVCTVLAVASWVFSFLLALVPLVLILSLPFCGPHEINHFFCEILSVLKLACADTWLNQVVIFAACVFILVGPLCLVLVSYLRILAAILRIQSGEGRRKAFSTCSSHLCVVGLFFGSAIVTYMAPKSRHPEEQQKVLSLFYSLFNPMLNPLIYSLRNAEVKGALRRALRKERLT.

The Extracellular portion of the chain corresponds to 1–24 (MEGNKTWITDITLPRFQVGPALEI). Residue Asn4 is glycosylated (N-linked (GlcNAc...) asparagine). A helical membrane pass occupies residues 25–48 (LLCGLFSAFYTLTLLGNGVIFGII). At 49–56 (CLDCKLHT) the chain is on the cytoplasmic side. A helical membrane pass occupies residues 57–78 (PMYFFLSHLAIVDISYASNYVP). Residues 79 to 99 (KMLTNLMNQESTISFFPCIMQ) lie on the Extracellular side of the membrane. A disulfide bridge connects residues Cys96 and Cys188. Residues 100–119 (TFLYLAFAHVECLILVVMSY) traverse the membrane as a helical segment. Residues 120–138 (DRYADICHPLRYNSLMSWR) are Cytoplasmic-facing. A helical transmembrane segment spans residues 139 to 157 (VCTVLAVASWVFSFLLALV). Residues 158-194 (PLVLILSLPFCGPHEINHFFCEILSVLKLACADTWLN) lie on the Extracellular side of the membrane. The chain crosses the membrane as a helical span at residues 195–218 (QVVIFAACVFILVGPLCLVLVSYL). Topologically, residues 219–235 (RILAAILRIQSGEGRRK) are cytoplasmic. Residues 236–258 (AFSTCSSHLCVVGLFFGSAIVTY) form a helical membrane-spanning segment. Over 259–271 (MAPKSRHPEEQQK) the chain is Extracellular. Residues 272 to 291 (VLSLFYSLFNPMLNPLIYSL) form a helical membrane-spanning segment. Residues 292 to 310 (RNAEVKGALRRALRKERLT) are Cytoplasmic-facing.

Belongs to the G-protein coupled receptor 1 family.

It localises to the cell membrane. Functionally, odorant receptor. The polypeptide is Olfactory receptor 2A14 (OR2A14) (Homo sapiens (Human)).